We begin with the raw amino-acid sequence, 362 residues long: Homeobox-leucine zipper protein HOX11 (362 aa).

A compositionally biased stretch (basic and acidic residues) spans 27–45 (REEAAEAGRRDHEVRRELE). The tract at residues 27 to 179 (REEAAEAGRR…DDGGSARKKL (153 aa)) is disordered. Residues 64–75 (LTLLPMVPGLGL) show a composition bias toward low complexity. Residues 126–135 (LSSSPNNSAG) are compositionally biased toward polar residues. Residues 145–160 (HGLGGNDAAPGGGGGD) show a composition bias toward gly residues. Residues 174–233 (SARKKLRLSKEQSAFLEESFKEHSTLNPKQKLALAKQLNLRPRQVEVWFQNRRARTKLKQ) constitute a DNA-binding region (homeobox). Residues 232 to 276 (KQTEVDCEYLKRCCETLTEENRRLQKELAELRALKTVHPFYMHLP) are leucine-zipper. Positions 301–330 (AATSSTAAPPAAPSSGGIAATSSSAAAAAA) are disordered.

The protein belongs to the HD-ZIP homeobox family. Class II subfamily. As to expression, expressed in stems, leaf sheaths and blades and panicles.

Its subcellular location is the nucleus. Functionally, probable transcription factor. The protein is Homeobox-leucine zipper protein HOX11 (HOX11) of Oryza sativa subsp. japonica (Rice).